Reading from the N-terminus, the 112-residue chain is MAIAYAKLYELIHKKIKDEREADELYNAIIEIIKESKVIVKNELKDELKDELATKKDIDLVREEMKAMEERILRYVDNRFNQLLIVQLIILFAIIITNPNAIELIKLLFGFK.

The chain crosses the membrane as a helical span at residues isoleucine 85 to isoleucine 105.

Belongs to the M.jannaschii MJ0023/MJ0349/MJ1072/MJ1074/MJ1107/MJECL16 family.

It localises to the membrane. This is an uncharacterized protein from Methanocaldococcus jannaschii (strain ATCC 43067 / DSM 2661 / JAL-1 / JCM 10045 / NBRC 100440) (Methanococcus jannaschii).